Reading from the N-terminus, the 392-residue chain is MDYYSILGISKTASAEEIKKAYRKLAVKYHPDKNPGDAAAEKRFKEVSEAYEVLSDPQKRDSYDRFGKDGPFAGAGGFGGAGGMGNMEDALRTFMGAFGGEFGGGSFFDGLFGGLGEAFGMRSDPAGARQGASKKVHINLTFEEAAHGVEKELVVSGYKSCETCSGQGAVNPQGIKSCERCKGSGQVVQSRGFFSMASTCPECGGEGRIITDPCSSCRGQGRVKDKRSVHVHIPAGVDSGMRLKMEGYGDAGQNGAPSGDLYVFIDVESHPVFERRGDDLILELPIGFVDAALGMKKEIPTLLKTEGSCRLTVPEGIQSGTILKVRNQGFPNVHGKGRGDLLVRISVETPQNLSEEQKELLRTFASTEKAENFPKKRSFLDKIKGFFSDFTV.

The region spanning 2-67 (DYYSILGISK…QKRDSYDRFG (66 aa)) is the J domain. The CR-type zinc finger occupies 148-226 (GVEKELVVSG…CRGQGRVKDK (79 aa)). 8 residues coordinate Zn(2+): Cys-161, Cys-164, Cys-178, Cys-181, Cys-200, Cys-203, Cys-214, and Cys-217. 4 CXXCXGXG motif repeats span residues 161–168 (CETCSGQG), 178–185 (CERCKGSG), 200–207 (CPECGGEG), and 214–221 (CSSCRGQG).

The protein belongs to the DnaJ family. Homodimer. It depends on Zn(2+) as a cofactor.

It localises to the cytoplasm. Functionally, participates actively in the response to hyperosmotic and heat shock by preventing the aggregation of stress-denatured proteins and by disaggregating proteins, also in an autonomous, DnaK-independent fashion. Unfolded proteins bind initially to DnaJ; upon interaction with the DnaJ-bound protein, DnaK hydrolyzes its bound ATP, resulting in the formation of a stable complex. GrpE releases ADP from DnaK; ATP binding to DnaK triggers the release of the substrate protein, thus completing the reaction cycle. Several rounds of ATP-dependent interactions between DnaJ, DnaK and GrpE are required for fully efficient folding. Also involved, together with DnaK and GrpE, in the DNA replication of plasmids through activation of initiation proteins. This Chlamydia pneumoniae (Chlamydophila pneumoniae) protein is Chaperone protein DnaJ.